Reading from the N-terminus, the 796-residue chain is Polyribonucleotide nucleotidyltransferase (796 aa).

Asp490 and Asp496 together coordinate Mg(2+). The KH domain occupies 557–616; that stretch reads PRIESIFINKDKIRNVIGSGGKNIRDICEKTGAKIEIIQDGTVMIYAVNNEAVEYAKSMI. An S1 motif domain is found at 626–693; that stretch reads GKVFEGTVVE…DREHVQLSMR (68 aa). Over residues 714–736 the composition is skewed to low complexity; that stretch reads SFSDDSSSSGTSSSGSSFKESYS. The interval 714–796 is disordered; sequence SFSDDSSSSG…HEVPRKPRFF (83 aa). Over residues 740 to 755 the composition is skewed to basic residues; the sequence is HGSHEKRRSGGSRSSR. The span at 771–784 shows a compositional bias: low complexity; sequence SDFGNNNRSFSNSR. The segment covering 785-796 has biased composition (basic and acidic residues); that stretch reads NGHEVPRKPRFF.

Belongs to the polyribonucleotide nucleotidyltransferase family. Requires Mg(2+) as cofactor.

Its subcellular location is the cytoplasm. The enzyme catalyses RNA(n+1) + phosphate = RNA(n) + a ribonucleoside 5'-diphosphate. Functionally, involved in mRNA degradation. Catalyzes the phosphorolysis of single-stranded polyribonucleotides processively in the 3'- to 5'-direction. The chain is Polyribonucleotide nucleotidyltransferase from Ehrlichia canis (strain Jake).